The chain runs to 323 residues: tRNA U34 carboxymethyltransferase (323 aa).

Residues Lys-91, Trp-105, Lys-110, Gly-130, 152–154 (DPT), 181–182 (IE), Met-196, Tyr-200, and Arg-315 contribute to the carboxy-S-adenosyl-L-methionine site.

It belongs to the class I-like SAM-binding methyltransferase superfamily. CmoB family. In terms of assembly, homotetramer.

The enzyme catalyses carboxy-S-adenosyl-L-methionine + 5-hydroxyuridine(34) in tRNA = 5-carboxymethoxyuridine(34) in tRNA + S-adenosyl-L-homocysteine + H(+). Its function is as follows. Catalyzes carboxymethyl transfer from carboxy-S-adenosyl-L-methionine (Cx-SAM) to 5-hydroxyuridine (ho5U) to form 5-carboxymethoxyuridine (cmo5U) at position 34 in tRNAs. This chain is tRNA U34 carboxymethyltransferase, found in Salmonella typhi.